The primary structure comprises 246 residues: Endonuclease V (246 aa).

Mg(2+)-binding residues include Asp-50 and Asp-120.

This sequence belongs to the endonuclease V family. Requires Mg(2+) as cofactor.

It localises to the cytoplasm. The enzyme catalyses Endonucleolytic cleavage at apurinic or apyrimidinic sites to products with a 5'-phosphate.. Its function is as follows. DNA repair enzyme involved in the repair of deaminated bases. Selectively cleaves double-stranded DNA at the second phosphodiester bond 3' to a deoxyinosine leaving behind the intact lesion on the nicked DNA. This Gloeobacter violaceus (strain ATCC 29082 / PCC 7421) protein is Endonuclease V.